A 940-amino-acid polypeptide reads, in one-letter code: UvrABC system protein A (940 aa).

ATP is bound at residue 33 to 40 (GVSGSGKS). The C4-type zinc finger occupies 252–279 (CPVCGFTVPELEPRLFSFNAPFGSCPDC). 2 consecutive ABC transporter domains span residues 309 to 586 (WYGK…KKSL) and 606 to 935 (IDKK…QYLK). 639–646 (GVSGSGKS) lines the ATP pocket. The C4-type zinc-finger motif lies at 738–764 (CEACSGDGIIKIEMHFLPDVYVPCEVC).

Belongs to the ABC transporter superfamily. UvrA family. As to quaternary structure, forms a heterotetramer with UvrB during the search for lesions.

It is found in the cytoplasm. In terms of biological role, the UvrABC repair system catalyzes the recognition and processing of DNA lesions. UvrA is an ATPase and a DNA-binding protein. A damage recognition complex composed of 2 UvrA and 2 UvrB subunits scans DNA for abnormalities. When the presence of a lesion has been verified by UvrB, the UvrA molecules dissociate. In Lactococcus lactis subsp. lactis (strain IL1403) (Streptococcus lactis), this protein is UvrABC system protein A.